A 98-amino-acid polypeptide reads, in one-letter code: Small ribosomal subunit protein bS20 (98 aa).

It belongs to the bacterial ribosomal protein bS20 family.

Its function is as follows. Binds directly to 16S ribosomal RNA. The protein is Small ribosomal subunit protein bS20 of Kosmotoga olearia (strain ATCC BAA-1733 / DSM 21960 / TBF 19.5.1).